The sequence spans 1147 residues: Sterol regulatory element-binding protein 1 (1147 aa).

A transcriptional activation (acidic) region spans residues 1–60 (MDEPPFSEAALEQALGEPCDLDAALLTDIEDMLQLINNQDSDFPGLFDPPYAGSGAGGTD). Topologically, residues 1–487 (MDEPPFSEAA…HSRGMLDRSR (487 aa)) are cytoplasmic. The 9aaTAD signature appears at 27–35 (TDIEDMLQL). Positions 39-193 (QDSDFPGLFD…PLPGLPLASP (155 aa)) are disordered. 2 stretches are compositionally biased toward low complexity: residues 62–71 (ASPDTSSPGS) and 78–95 (TLSSSLEAFLSGPQAAPS). A compositionally biased stretch (pro residues) spans 96-105 (PLSPPQPAPT). Residues S98 and S117 each carry the phosphoserine modification. Residues 170-190 (GGFSTGSPPGNTQQPLPGLPL) show a composition bias toward low complexity. The interval 234–497 (QQVPVLLQPH…LALCTLVFLC (264 aa)) is interaction with LMNA. The bHLH domain occupies 323–373 (EKRTAHNAIEKRYRSSINDKIIELKDLVVGTEAKLNKSAVLRKAIDYIRFL). Residues S337 and S338 each carry the phosphoserine; by SIK1 modification. The leucine-zipper stretch occupies residues 373–394 (LQHSNQKLKQENLSLRTAVHKS). S396 bears the Phosphoserine; by AMPK mark. S402 bears the Phosphoserine; by SIK1 mark. A disordered region spans residues 421–479 (VEDTLTPPPSDAGSPFQSSPLSLGSRGSGSGGSGSDSEPDSPVFEDSKAKPEQRPSLHS). The residue at position 457 (S457) is a Phosphoserine. Positions 465–479 (EDSKAKPEQRPSLHS) are enriched in basic and acidic residues. The helical transmembrane segment at 488–508 (LALCTLVFLCLSCNPLASLLG) threads the bilayer. At 509–547 (ARGLPSPSDTTSVYHSPGRNVLGTESRDGPGWAQWLLPP) the chain is on the lumenal side. A helical membrane pass occupies residues 548-568 (VVWLLNGLLVLVSLVLLFVYG). Over 569–1147 (EPVTRPHSGP…LGGGTTVTSS (579 aa)) the chain is Cytoplasmic. A Phosphoserine modification is found at S1060.

The protein belongs to the SREBP family. As to quaternary structure, forms a tight complex with SCAP, the SCAP-SREBP complex, in the endoplasmic reticulum membrane and the Golgi apparatus. Interacts with PAQR3; the interaction anchors the SCAP-SREBP complex to the Golgi apparatus in low cholesterol conditions. In terms of assembly, efficient DNA binding of the soluble transcription factor fragment requires dimerization with another bHLH protein. Interacts with CEBPA, the interaction produces a transcriptional synergy. Interacts with LMNA. In terms of processing, processed in the Golgi apparatus, releasing the protein from the membrane. At low cholesterol the SCAP-SREBP complex is recruited into COPII vesicles for export from the endoplasmic reticulum. In the Golgi, complex SREBPs are cleaved sequentially by site-1 (MBTPS1, S1P) and site-2 (MBTPS2, S2P) protease. The first cleavage by site-1 protease occurs within the luminal loop, the second cleavage by site-2 protease occurs within the first transmembrane domain, releasing the transcription factor from the Golgi membrane. Post-translationally, phosphorylated by AMPK, leading to suppress protein processing and nuclear translocation, and repress target gene expression. Phosphorylation at Ser-402 by SIK1 represses activity possibly by inhibiting DNA-binding. SCAP-free SREBF1 is ubiquitinated by the BCR(ARMC5) complex, leading to its degradation. In terms of processing, ubiquitinated; the nuclear form has a rapid turnover and is rapidly ubiquitinated and degraded by the proteasome in the nucleus. As to expression, expressed in a wide variety of tissues, most abundant in liver and adrenal gland. In fetal tissues lung and liver shows highest expression. Predominates in hepatoma cell lines. Also expressed in kidney, brain, white fat, and muscle. In terms of tissue distribution, predominantly expressed in liver and adipose tissues. Also expressed in kidney, brain, white fat, and muscle.

Its subcellular location is the endoplasmic reticulum membrane. It localises to the golgi apparatus membrane. The protein localises to the cytoplasmic vesicle. It is found in the COPII-coated vesicle membrane. The protein resides in the nucleus. Activation by cleavage is down-regulated upon activation of SIRT3-dependent PRKAA1/AMPK-alpha signaling cascade which leads to inhibition of ATP-consuming lipogenesis to restore cellular energy balance. In terms of biological role, precursor of the transcription factor form (Processed sterol regulatory element-binding protein 1), which is embedded in the endoplasmic reticulum membrane. Low sterol concentrations promote processing of this form, releasing the transcription factor form that translocates into the nucleus and activates transcription of genes involved in cholesterol biosynthesis and lipid homeostasis. Key transcription factor that regulates expression of genes involved in cholesterol biosynthesis and lipid homeostasis. Binds to the sterol regulatory element 1 (SRE-1) (5'-ATCACCCCAC-3'). Has dual sequence specificity binding to both an E-box motif (5'-ATCACGTGA-3') and to SRE-1 (5'-ATCACCCCAC-3'). Regulates the promoters of genes involved in cholesterol biosynthesis and the LDL receptor (LDLR) pathway of sterol regulation. Functionally, isoform expressed only in select tissues, which has higher transcriptional activity compared to SREBP-1C. Able to stimulate both lipogenic and cholesterogenic gene expression. Has a role in the nutritional regulation of fatty acids and triglycerides in lipogenic organs such as the liver. Required for innate immune response in macrophages by regulating lipid metabolism. Its function is as follows. Predominant isoform expressed in most tissues, which has weaker transcriptional activity compared to isoform SREBP-1A. Primarily controls expression of lipogenic gene. Strongly activates global lipid synthesis in rapidly growing cells. In terms of biological role, the absence of Golgi proteolytic processing requirement makes this isoform constitutively active in transactivation of lipogenic gene promoters. This is Sterol regulatory element-binding protein 1 from Homo sapiens (Human).